The primary structure comprises 344 residues: Dihydroorotase (344 aa).

Zn(2+)-binding residues include H13 and H15. Substrate is bound by residues 15–17 (HLR) and N41. Zn(2+) contacts are provided by K99, H136, and H174. K99 is subject to N6-carboxylysine. H136 contributes to the substrate binding site. Substrate is bound at residue L219. D247 is a binding site for Zn(2+). The active site involves D247. Substrate is bound by residues H251 and A263.

The protein belongs to the metallo-dependent hydrolases superfamily. DHOase family. Class II DHOase subfamily. Homodimer. Zn(2+) is required as a cofactor.

The enzyme catalyses (S)-dihydroorotate + H2O = N-carbamoyl-L-aspartate + H(+). It participates in pyrimidine metabolism; UMP biosynthesis via de novo pathway; (S)-dihydroorotate from bicarbonate: step 3/3. Catalyzes the reversible cyclization of carbamoyl aspartate to dihydroorotate. The sequence is that of Dihydroorotase from Shewanella denitrificans (strain OS217 / ATCC BAA-1090 / DSM 15013).